The following is a 1693-amino-acid chain: Non-structural polyprotein pORF1 (1693 aa).

The 185-residue stretch at 56-240 (VFRPEVFWNH…HDVSNLRSWI (185 aa)) folds into the Alphavirus-like MT domain. Positions 60-240 (EVFWNHPIQR…HDVSNLRSWI (181 aa)) are methyltransferase. Residues 241–439 (RTTKVTGDHP…FYAQCRRWLS (199 aa)) are Y-domain. Cys-434 and Cys-481 form a disulfide bridge. The segment at 442–509 (FHLDPRVLVF…EAYEGSDVDP (68 aa)) is putative protease. Positions 510–691 (AESAISDISG…FSPGHVWESA (182 aa)) are zinc-binding. His-671, Glu-673, and His-686 together coordinate Zn(2+). The interval 712–778 (SSPARPDLGF…AITHQTARHR (67 aa)) is hinge. Residues 732–768 (ATPTLAAPLPPPAPDPSPPPSAPALAEPASGATAGAP) are disordered. A compositionally biased stretch (pro residues) spans 739–753 (PLPPPAPDPSPPPSA). Residues 754 to 768 (PALAEPASGATAGAP) are compositionally biased toward low complexity. In terms of domain architecture, Macro spans 775 to 921 (ARHRRLLFTY…LYLPELAARW (147 aa)). The tract at residues 785-942 (PDGSKVFAGS…TITEDVARTA (158 aa)) is X-domain. Positions 934–1082 (ITEDVARTAN…RPDLGPTSWW (149 aa)) constitute a (+)RNA virus helicase ATP-binding domain. An NTPase/helicase region spans residues 960–1204 (GCRVTPGVVQ…ISDAIVNNFF (245 aa)). Residue 975-982 (GVPGSGKS) coordinates ATP. The (+)RNA virus helicase C-terminal domain maps to 1083 to 1216 (HVTHRWPADV…GGEIGHQRPS (134 aa)). Positions 1207–1693 (GGEIGHQRPS…LTNSILCRVE (487 aa)) are RNA-directed RNA polymerase. One can recognise a RdRp catalytic domain in the interval 1454–1565 (SMVFENDFSE…LCSEYRQSPG (112 aa)).

The protein belongs to the hepevirus non-structural polyprotein family. In terms of assembly, the protease domain interacts with host EIF2AK4 (via C-terminus); this interaction inhibits dimerization of EIF2AK4 and prevents EIF2AK4-mediated phosphorylation of host EIF2A. Mg(2+) serves as cofactor. Post-translationally, ORF1 polyprotein does not seem to be processed into distinct enzymatic domains by a viral protease belonging to ORF1, but could be processed by a host serine protease like thrombin.

It localises to the host cytoplasm. The protein localises to the host perinuclear region. The enzyme catalyses RNA(n) + a ribonucleoside 5'-triphosphate = RNA(n+1) + diphosphate. The catalysed reaction is GTP + S-adenosyl-L-methionine = N(7)-methyl-GTP + S-adenosyl-L-homocysteine. With respect to regulation, putative protease: Inhibited by chymostatin. Methyltransferase: Displays a capping enzyme activity. This function is necessary since all viral RNAs are synthesized in the cytoplasm, and host capping enzymes are restricted to the nucleus. The enzymatic reaction involves a covalent link between 7-methyl-GMP and the methyltransferase, whereas eukaryotic capping enzymes form a covalent complex only with GMP. Methyltransferase catalyzes transfer of a methyl group from S-adenosylmethionine to GTP and GDP to yield m(7)GTP or m(7)GDP. GDP is a better substrate than GTP. This enzyme also displays guanylyltransferase activity to form a covalent complex, methyltransferase-m(7)GMP, from which 7-methyl-GMP is transferred to the mRNA to create the cap structure. Functionally, Y-domain: Indispensable for virus replication. In terms of biological role, putative protease: The putative protease domain although necessary for replication of the virus may not be a protease but rather a structural Zn(2+)-binding domain. Inhibits induction of IFN-beta by MDA5 and RIG-I pathways and down-regulates the expression of MDA5. Its function is as follows. NTPase/helicase: Multi-functional protein that exhibits NTPase and RNA unwinding activities. Hydrolyzes all NTPs efficiently and unwinds RNA duplexes containing 5' overhangs. Possesses a sequence independent RNA-5'-triphosphatase (RTPase) activity suggestive of its role in forming viral cap structure. Also participates in viral genome replication, RNA translocation and genome packaging/unpackaging. RNA-directed RNA polymerase: Plays an essential role in the virus replication. Binds to the 3'-end of the genomic RNA to initiate viral replication. This is Non-structural polyprotein pORF1 from Homo sapiens (Human).